The sequence spans 738 residues: Propionyl-CoA carboxylase alpha chain, mitochondrial (738 aa).

A Biotin carboxylation domain is found at 62-509; it reads KFDKILIANR…TTKYLPEVYP (448 aa). ATP contacts are provided by residues K177, 209–270, E261, and N296; that span reads SREI…PRHI. Residues 181–378 enclose the ATP-grasp domain; sequence KKIATAARVS…IVQQMLRVAY (198 aa). E336, E349, and N351 together coordinate Mg(2+). Mn(2+) is bound by residues E336, E349, and N351. R353 is a catalytic residue. F409 contacts biotin. The Biotinyl-binding domain occupies 663–738; sequence KAKVDLSTVV…DEGEVLVELE (76 aa). K704 carries the post-translational modification N6-biotinyllysine.

The holoenzyme is a dodecamer composed of 6 alpha subunits and 6 beta subunits. Interacts with sir-2.2. Biotin is required as a cofactor. It depends on Mg(2+) as a cofactor. The cofactor is Mn(2+). In terms of processing, the biotin cofactor is covalently attached to the C-terminal biotinyl-binding domain and is required for the catalytic activity.

It localises to the mitochondrion matrix. The enzyme catalyses propanoyl-CoA + hydrogencarbonate + ATP = (S)-methylmalonyl-CoA + ADP + phosphate + H(+). It catalyses the reaction butanoyl-CoA + hydrogencarbonate + ATP = (2S)-ethylmalonyl-CoA + ADP + phosphate + H(+). Its pathway is metabolic intermediate metabolism; propanoyl-CoA degradation; succinyl-CoA from propanoyl-CoA: step 1/3. Functionally, this is one of the 2 subunits of the biotin-dependent propionyl-CoA carboxylase (PCC), a mitochondrial enzyme involved in the catabolism of odd chain fatty acids, branched-chain amino acids isoleucine, threonine, methionine, and valine and other metabolites. Propionyl-CoA carboxylase catalyzes the carboxylation of propionyl-CoA/propanoyl-CoA to D-methylmalonyl-CoA/(S)-methylmalonyl-CoA. Within the holoenzyme, the alpha subunit catalyzes the ATP-dependent carboxylation of the biotin carried by the biotin carboxyl carrier (BCC) domain, while the beta subunit then transfers the carboxyl group from carboxylated biotin to propionyl-CoA. Propionyl-CoA carboxylase also significantly acts on butyryl-CoA/butanoyl-CoA, which is converted to ethylmalonyl-CoA/(2S)-ethylmalonyl-CoA. Other alternative minor substrates include (2E)-butenoyl-CoA/crotonoyl-CoA. This Caenorhabditis briggsae protein is Propionyl-CoA carboxylase alpha chain, mitochondrial (pcca-1).